We begin with the raw amino-acid sequence, 96 residues long: Aspartyl/glutamyl-tRNA(Asn/Gln) amidotransferase subunit C (96 aa).

The protein belongs to the GatC family. In terms of assembly, heterotrimer of A, B and C subunits.

The catalysed reaction is L-glutamyl-tRNA(Gln) + L-glutamine + ATP + H2O = L-glutaminyl-tRNA(Gln) + L-glutamate + ADP + phosphate + H(+). It catalyses the reaction L-aspartyl-tRNA(Asn) + L-glutamine + ATP + H2O = L-asparaginyl-tRNA(Asn) + L-glutamate + ADP + phosphate + 2 H(+). Its function is as follows. Allows the formation of correctly charged Asn-tRNA(Asn) or Gln-tRNA(Gln) through the transamidation of misacylated Asp-tRNA(Asn) or Glu-tRNA(Gln) in organisms which lack either or both of asparaginyl-tRNA or glutaminyl-tRNA synthetases. The reaction takes place in the presence of glutamine and ATP through an activated phospho-Asp-tRNA(Asn) or phospho-Glu-tRNA(Gln). The polypeptide is Aspartyl/glutamyl-tRNA(Asn/Gln) amidotransferase subunit C (Wolinella succinogenes (strain ATCC 29543 / DSM 1740 / CCUG 13145 / JCM 31913 / LMG 7466 / NCTC 11488 / FDC 602W) (Vibrio succinogenes)).